Consider the following 237-residue polypeptide: Methylosome subunit pICln (237 aa).

Ser-2 bears the N-acetylserine mark. Ser-102, Ser-144, Ser-193, Ser-195, Ser-198, and Ser-210 each carry phosphoserine. The interval 135 to 159 (LHPDPEDEDSDDYDGEEYDVEAHEQ) is disordered. Over residues 139 to 153 (PEDEDSDDYDGEEYD) the composition is skewed to acidic residues. Thr-223 is subject to Phosphothreonine.

This sequence belongs to the pICln (TC 1.A.47) family. As to quaternary structure, component of the methylosome, a 20S complex containing at least PRMT5/SKB1, WDR77/MEP50 and CLNS1A/pICln. May mediate SNRPD1 and SNRPD3 methylation. Forms a 6S pICln-Sm complex composed of CLNS1A/pICln, SNRPD1, SNRPD2, SNRPE, SNRPF and SNRPG; ring-like structure where CLNS1A/pICln mimics additional Sm proteins and which is unable to assemble into the core snRNP. Interacts with LSM10 and LSM11.

It is found in the cytoplasm. Its subcellular location is the cytosol. The protein localises to the nucleus. It localises to the cytoskeleton. Its function is as follows. Involved in both the assembly of spliceosomal snRNPs and the methylation of Sm proteins. Chaperone that regulates the assembly of spliceosomal U1, U2, U4 and U5 small nuclear ribonucleoproteins (snRNPs), the building blocks of the spliceosome, and thereby plays an important role in the splicing of cellular pre-mRNAs. Most spliceosomal snRNPs contain a common set of Sm proteins SNRPB, SNRPD1, SNRPD2, SNRPD3, SNRPE, SNRPF and SNRPG that assemble in a heptameric protein ring on the Sm site of the small nuclear RNA to form the core snRNP (Sm core). In the cytosol, the Sm proteins SNRPD1, SNRPD2, SNRPE, SNRPF and SNRPG are trapped in an inactive 6S pICln-Sm complex by the chaperone CLNS1A that controls the assembly of the core snRNP. Dissociation by the SMN complex of CLNS1A from the trapped Sm proteins and their transfer to an SMN-Sm complex triggers the assembly of core snRNPs and their transport to the nucleus. The protein is Methylosome subunit pICln (CLNS1A) of Homo sapiens (Human).